A 234-amino-acid chain; its full sequence is Acetylxylan esterase 2 (234 aa).

Positions 1–17 are cleaved as a signal peptide; sequence MHSKFFAASLLGLGAAA. Positions 18–27 are excised as a propeptide; it reads IPLEGVMEKR. 2 disulfides stabilise this stretch: cysteine 29/cysteine 106 and cysteine 73/cysteine 79. Serine 117 is a catalytic residue. Cystine bridges form between cysteine 128/cysteine 188, cysteine 174/cysteine 206, and cysteine 198/cysteine 205. Aspartate 202 is a catalytic residue. Asparagine 207 is a glycosylation site (N-linked (GlcNAc...) asparagine). Residue histidine 214 is part of the active site.

The protein belongs to the cutinase family. Acetylxylan esterase subfamily. As to quaternary structure, monomer.

The protein resides in the secreted. The enzyme catalyses Deacetylation of xylans and xylo-oligosaccharides.. The protein operates within glycan degradation; xylan degradation. Its function is as follows. Degrades acetylated xylans by cleaving acetyl side groups from the hetero-xylan backbone. This is Acetylxylan esterase 2 (axe-2) from Talaromyces purpureogenus (Soft rot fungus).